The primary structure comprises 229 residues: Large ribosomal subunit protein uL1 (229 aa).

It belongs to the universal ribosomal protein uL1 family. Part of the 50S ribosomal subunit.

Its function is as follows. Binds directly to 23S rRNA. The L1 stalk is quite mobile in the ribosome, and is involved in E site tRNA release. In terms of biological role, protein L1 is also a translational repressor protein, it controls the translation of the L11 operon by binding to its mRNA. This chain is Large ribosomal subunit protein uL1, found in Enterococcus faecalis (strain ATCC 700802 / V583).